A 65-amino-acid chain; its full sequence is MPKMKTNRSAAKRFRVTRKGKIIRNHAYKSHKTRKKRRNVLRALRKKDVVSSADKNRVLRLLGKK.

It belongs to the bacterial ribosomal protein bL35 family.

This chain is Large ribosomal subunit protein bL35, found in Thermotoga neapolitana (strain ATCC 49049 / DSM 4359 / NBRC 107923 / NS-E).